Consider the following 618-residue polypeptide: DNA mismatch repair protein MutL (618 aa).

Positions 348-359 (QTDTARSPTGNF) are enriched in polar residues. The disordered stretch occupies residues 348–400 (QTDTARSPTGNFESGEVFDYPKSQLQPSHSVSSGGASLGSRSAGGSGGAYRAT). Low complexity predominate over residues 377–388 (SVSSGGASLGSR).

The protein belongs to the DNA mismatch repair MutL/HexB family.

Its function is as follows. This protein is involved in the repair of mismatches in DNA. It is required for dam-dependent methyl-directed DNA mismatch repair. May act as a 'molecular matchmaker', a protein that promotes the formation of a stable complex between two or more DNA-binding proteins in an ATP-dependent manner without itself being part of a final effector complex. In Pseudoalteromonas translucida (strain TAC 125), this protein is DNA mismatch repair protein MutL.